The sequence spans 1226 residues: Cytosolic carboxypeptidase 1 (1226 aa).

A disordered region spans residues 599–619 (TEDDEDTESNSSVEQASVEVP). The region spanning 848-1138 (YPYTYSTLQM…KFCVGLLRLK (291 aa)) is the Peptidase M14 domain. Zn(2+)-binding residues include His920, Glu923, and His1017. The Proton donor/acceptor role is filled by Glu1102. Ser1168 bears the Phosphoserine mark. The disordered stretch occupies residues 1206–1226 (YEPSAQEEVLSDSELSRTYLP).

It belongs to the peptidase M14 family. As to quaternary structure, interacts with MYLK. Zn(2+) serves as cofactor.

The protein localises to the cytoplasm. It is found in the cytosol. It localises to the nucleus. The protein resides in the mitochondrion. The enzyme catalyses (L-glutamyl)(n+1)-gamma-L-glutamyl-L-glutamyl-[protein] + H2O = (L-glutamyl)(n)-gamma-L-glutamyl-L-glutamyl-[protein] + L-glutamate. It carries out the reaction C-terminal L-alpha-aminoacyl-L-glutamyl-L-glutamyl-[tubulin] + H2O = C-terminal L-alpha-aminoacyl-L-glutamyl-[tubulin] + L-glutamate. Functionally, metallocarboxypeptidase that mediates protein deglutamylation of tubulin and non-tubulin target proteins. Catalyzes the removal of polyglutamate side chains present on the gamma-carboxyl group of glutamate residues within the C-terminal tail of alpha- and beta-tubulin. Specifically cleaves tubulin long-side-chains, while it is not able to remove the branching point glutamate. Also catalyzes the removal of polyglutamate residues from the carboxy-terminus of alpha-tubulin as well as non-tubulin proteins such as MYLK. Involved in KLF4 deglutamylation which promotes KLF4 proteasome-mediated degradation, thereby negatively regulating cell pluripotency maintenance and embryogenesis. The protein is Cytosolic carboxypeptidase 1 of Homo sapiens (Human).